A 443-amino-acid chain; its full sequence is Acyl transferase 10 (443 aa).

Catalysis depends on proton acceptor residues histidine 182 and aspartate 386.

The protein belongs to the plant acyltransferase family.

In terms of biological role, involved in the incorporation of ferulate into the cell wall. May act as arabinoxylan feruloyl transferase. May function as p-coumaroyl-CoA transferase involved in glucuronoarabinoxylan modification. The sequence is that of Acyl transferase 10 from Oryza sativa subsp. japonica (Rice).